A 665-amino-acid chain; its full sequence is Long chain acyl-CoA synthetase 2 (665 aa).

228–239 contributes to the ATP binding site; it reads IMYTSGTTGEPK. A fatty acid-binding region spans residues 496–520; it reads DGWFHTGDIGEWQEDGSMKIIDRKK.

This sequence belongs to the ATP-dependent AMP-binding enzyme family. The cofactor is Mg(2+). As to expression, expressed along the entire length of the stem, but expression was not entirely epidermal specific, with some expression found in internal cell layers as well. Was expressed in leave epidermal cells, flowers (sepals, petals, stamens, filaments and carpel), siliques and developing seeds. In roots, expression was detected in an internal cell layer, probably the endodermal layer.

The protein resides in the endoplasmic reticulum. The catalysed reaction is a long-chain fatty acid + ATP + CoA = a long-chain fatty acyl-CoA + AMP + diphosphate. It functions in the pathway lipid metabolism; fatty acid metabolism. In terms of biological role, activation of long-chain fatty acids for both synthesis of cellular lipids, and degradation via beta-oxidation. Acts in the cutin pathway. Preferentially uses palmitate, palmitoleate, oleate and linoleate. Required for repression of lateral root formation through its role in cutin biosynthesis and subsequent aerial tissues permeability. This Arabidopsis thaliana (Mouse-ear cress) protein is Long chain acyl-CoA synthetase 2 (LACS2).